The primary structure comprises 155 residues: Large ribosomal subunit protein bL17 (155 aa).

Belongs to the bacterial ribosomal protein bL17 family. In terms of assembly, part of the 50S ribosomal subunit. Contacts protein L32.

In Syntrophotalea carbinolica (strain DSM 2380 / NBRC 103641 / GraBd1) (Pelobacter carbinolicus), this protein is Large ribosomal subunit protein bL17.